A 440-amino-acid chain; its full sequence is Eukaryotic translation initiation factor 3 subunit E (440 aa).

Positions 219-392 (VYFNYPKGRD…GQVVMGAKTT (174 aa)) constitute a PCI domain.

It belongs to the eIF-3 subunit E family. Component of the eukaryotic translation initiation factor 3 (eIF-3) complex.

It localises to the cytoplasm. In terms of biological role, component of the eukaryotic translation initiation factor 3 (eIF-3) complex, which is involved in protein synthesis of a specialized repertoire of mRNAs and, together with other initiation factors, stimulates binding of mRNA and methionyl-tRNAi to the 40S ribosome. The eIF-3 complex specifically targets and initiates translation of a subset of mRNAs involved in cell proliferation. The sequence is that of Eukaryotic translation initiation factor 3 subunit E from Brugia malayi (Filarial nematode worm).